A 320-amino-acid polypeptide reads, in one-letter code: MSKGSSKHTVRINQTWYIVSFILGLSLFAGVLLSTIYYVLSPIQEQAATFDRNKQMLLAAHILDFKGRFQIQEKKEWVPATFDKKTQLLEVATKKVSEVSYPELELYAERFVRPLLTDAQGKVFSFEEKNLNPIEFFEKYQESPPCQQSPLPFYVILENTSRTENMSGADVAKDLSTVQALIFPISGFGLWGPIHGYLGVKNDGDTVLGTAWYQQGETPGLGANITNPEWQEQFYGKKIFLQDSSGTTNFATTDLGLEVVKGSVRTTLGDSPKALSAIDGISGATLTCNGVTEAYVQSLACYRQLLINFSNLTHEKKTGE.

The helical transmembrane segment at 16 to 36 (WYIVSFILGLSLFAGVLLSTI) threads the bilayer. Residue Thr285 is modified to FMN phosphoryl threonine.

This sequence belongs to the NqrC family. As to quaternary structure, composed of six subunits; NqrA, NqrB, NqrC, NqrD, NqrE and NqrF. The cofactor is FMN.

It is found in the cell inner membrane. It catalyses the reaction a ubiquinone + n Na(+)(in) + NADH + H(+) = a ubiquinol + n Na(+)(out) + NAD(+). In terms of biological role, NQR complex catalyzes the reduction of ubiquinone-1 to ubiquinol by two successive reactions, coupled with the transport of Na(+) ions from the cytoplasm to the periplasm. NqrA to NqrE are probably involved in the second step, the conversion of ubisemiquinone to ubiquinol. The sequence is that of Na(+)-translocating NADH-quinone reductase subunit C from Chlamydia pneumoniae (Chlamydophila pneumoniae).